A 59-amino-acid polypeptide reads, in one-letter code: Large ribosomal subunit protein bL32 (59 aa).

Belongs to the bacterial ribosomal protein bL32 family.

The sequence is that of Large ribosomal subunit protein bL32 from Synechococcus sp. (strain JA-2-3B'a(2-13)) (Cyanobacteria bacterium Yellowstone B-Prime).